Consider the following 626-residue polypeptide: Probable potassium transport system protein Kup (626 aa).

12 helical membrane-spanning segments follow: residues 13 to 33 (VALMMGALGVVYGDIGTSPLY), 53 to 73 (VLSILFWLLMVVVSFKYVLLI), 102 to 122 (FFVVLGIFGAALFYGDSMITP), 138 to 158 (HTLDPWIVPLALLVLLALFAI), 169 to 189 (LFGPVMVVWFATLGVLGGWQV), 207 to 227 (FVFEFPVMSFLLLGAVVLALT), 248 to 268 (WFSMVLPSLTLCYLGQGALLL), 277 to 297 (PFFLMAPEWGLAALVGLATVA), 338 to 358 (IYLPQVNALLLCAVLVLVITF), 367 to 387 (AYGFAVTGTMLMTSILAFAVL), 399 to 419 (WMLVLGVLLIIDVLLFSANIF), and 421 to 441 (IHEGGWMPLLVGVVVFTLMMT).

It belongs to the HAK/KUP transporter (TC 2.A.72) family.

Its subcellular location is the cell inner membrane. The catalysed reaction is K(+)(in) + H(+)(in) = K(+)(out) + H(+)(out). Transport of potassium into the cell. Likely operates as a K(+):H(+) symporter. In Bordetella avium (strain 197N), this protein is Probable potassium transport system protein Kup.